Reading from the N-terminus, the 61-residue chain is Large ribosomal subunit protein eL29y (61 aa).

Residues 1–61 are disordered; the sequence is MAKSKNHTAH…KSGENAGVEE (61 aa). Over residues 15 to 31 the composition is skewed to basic residues; the sequence is KAHKNGIKKPRRHRHTP.

The protein belongs to the eukaryotic ribosomal protein eL29 family.

The chain is Large ribosomal subunit protein eL29y (RPL29B) from Arabidopsis thaliana (Mouse-ear cress).